The following is a 391-amino-acid chain: MNIHEYQGKDILRKFGVAVPKGIVAHSPEEAKQAAEQLFEEQSSPVVVVKAQIHAGGRGKAGGVKLAKSPEEAYEIASQMIGTTLVTHQTGPEGKEVRRLLVEEGMNIDREFYVGITLDRATSQNVLMISTEGGMEIEKVAEETPDRLLKIQVDPLFGLQGFQAREAAFFLGLEGEQFRSAVSFIMSLYKAYTSIDAALAEINPLVVTKEGRVLALDAKINFDSNALYRHKDFLELRDITEEDPFEVEASKSNLNYVRLDGNVGCMVNGAGLAMGTMDIIQLAGGKPANFLDVGGGASPQTVEEGFKIILSDKNVKAILVNIFGGIVRCDRVAGGIIEAAKKIGLNLPVIVRLEGTNADIAQKMLDESGLNLIAADGLKDAAQKVTEALSA.

Residues 9–248 form the ATP-grasp domain; that stretch reads KDILRKFGVA…ITEEDPFEVE (240 aa). Residues Lys-50, 57–59, Glu-103, Met-106, and Glu-111 each bind ATP; that span reads GRG. Residues Asn-203 and Asp-217 each coordinate Mg(2+). Residues Asn-268 and 325–327 each bind substrate; that span reads GIV.

Belongs to the succinate/malate CoA ligase beta subunit family. As to quaternary structure, heterotetramer of two alpha and two beta subunits. Mg(2+) is required as a cofactor.

The catalysed reaction is succinate + ATP + CoA = succinyl-CoA + ADP + phosphate. The enzyme catalyses GTP + succinate + CoA = succinyl-CoA + GDP + phosphate. It participates in carbohydrate metabolism; tricarboxylic acid cycle; succinate from succinyl-CoA (ligase route): step 1/1. Its function is as follows. Succinyl-CoA synthetase functions in the citric acid cycle (TCA), coupling the hydrolysis of succinyl-CoA to the synthesis of either ATP or GTP and thus represents the only step of substrate-level phosphorylation in the TCA. The beta subunit provides nucleotide specificity of the enzyme and binds the substrate succinate, while the binding sites for coenzyme A and phosphate are found in the alpha subunit. The sequence is that of Succinate--CoA ligase [ADP-forming] subunit beta from Chlorobium phaeovibrioides (strain DSM 265 / 1930) (Prosthecochloris vibrioformis (strain DSM 265)).